The primary structure comprises 34 residues: Trypsin inhibitor 2 (34 aa).

A cross-link (cyclopeptide (Ser-Gly)) is located at residues 1-34 (SGSDGGVCPKILKKCRRDSDCPGACICRGNGYCG). The (2-aminosuccinimidyl)acetic acid (Asp-Gly); alternate cross-link spans 4 to 5 (DG). Positions 4–5 (DG) form a cross-link, isoaspartyl glycine isopeptide (Asp-Gly); alternate. 3 disulfide bridges follow: C8–C25, C15–C27, and C21–C33.

Post-translationally, a cyclic succinimide probably forms by loss of water between Asp-4 and Gly-5, that can then rehydrate to either the original peptide bond or to a beta-aspartyl isopeptide bond. Three isoforms of MCoTI-II are detected, two with the parent molecular weight, corresponding to the unmodified and proposed isopeptide forms, and one with a molecular weight 18 Da lower, corresponding to a succinimide cross-linked form. This is a cyclic peptide.

The protein localises to the secreted. In terms of biological role, inhibits trypsin; probably participates in a plant defense mechanism. This chain is Trypsin inhibitor 2, found in Momordica cochinchinensis (Spiny bitter cucumber).